A 233-amino-acid chain; its full sequence is Small ribosomal subunit protein uS2 (233 aa).

It belongs to the universal ribosomal protein uS2 family.

The protein is Small ribosomal subunit protein uS2 of Clostridium botulinum (strain Alaska E43 / Type E3).